A 575-amino-acid chain; its full sequence is Arginine--tRNA ligase (575 aa).

Residues 131 to 141 (ANPNGPLHIGH) carry the 'HIGH' region motif.

It belongs to the class-I aminoacyl-tRNA synthetase family.

It is found in the cytoplasm. It catalyses the reaction tRNA(Arg) + L-arginine + ATP = L-arginyl-tRNA(Arg) + AMP + diphosphate. This Methanobrevibacter smithii (strain ATCC 35061 / DSM 861 / OCM 144 / PS) protein is Arginine--tRNA ligase.